A 220-amino-acid chain; its full sequence is Fructose-6-phosphate aldolase 1 (220 aa).

Lysine 85 (schiff-base intermediate with substrate) is an active-site residue.

Belongs to the transaldolase family. Type 3A subfamily. In terms of assembly, homodecamer. Five subunits are arranged as a pentamer, and two ring-like pentamers pack like a donut to form the decamer.

It localises to the cytoplasm. The enzyme catalyses beta-D-fructose 6-phosphate = dihydroxyacetone + D-glyceraldehyde 3-phosphate. With respect to regulation, inhibited by glycerol, inorganic phosphate and arabinose 5-phosphate. Its function is as follows. Catalyzes the reversible formation of fructose 6-phosphate from dihydroxyacetone (DHA) and D-glyceraldehyde 3-phosphate via an aldolization reaction. Can utilize several aldehydes as acceptor compounds in vitro, and hydroxyacetone (HA) or 1-hydroxy-butan-2-one as alternative donor substrate. Is also able to catalyze the direct stereoselective self-aldol addition of glycolaldehyde to furnish D-(-)-threose, and cross-aldol reactions of glycolaldehyde to other aldehyde acceptors. Is not able to cleave fructose, fructose 1-phosphate, glucose 6-phosphate, sedoheptulose 1,7-bisphosphate, xylulose 5-phosphate, ribulose 5-phosphate, and fructose 1,6-bisphosphate; cannot use dihydroxyacetone phosphate as donor compound nor D-glyceraldehyde as acceptor. Does not display transaldolase activity. The polypeptide is Fructose-6-phosphate aldolase 1 (fsaA) (Escherichia coli (strain K12)).